The chain runs to 231 residues: Flagellar L-ring protein (231 aa).

The N-terminal stretch at 1 to 18 (MNRFICVLALSGSAVLAG) is a signal peptide. Cysteine 19 carries N-palmitoyl cysteine lipidation. The S-diacylglycerol cysteine moiety is linked to residue cysteine 19.

Belongs to the FlgH family. As to quaternary structure, the basal body constitutes a major portion of the flagellar organelle and consists of four rings (L,P,S, and M) mounted on a central rod.

The protein resides in the cell outer membrane. Its subcellular location is the bacterial flagellum basal body. Functionally, assembles around the rod to form the L-ring and probably protects the motor/basal body from shearing forces during rotation. This Pseudomonas fluorescens (strain ATCC BAA-477 / NRRL B-23932 / Pf-5) protein is Flagellar L-ring protein.